Reading from the N-terminus, the 147-residue chain is Large ribosomal subunit protein uL13 (147 aa).

The protein belongs to the universal ribosomal protein uL13 family. Part of the 50S ribosomal subunit.

In terms of biological role, this protein is one of the early assembly proteins of the 50S ribosomal subunit, although it is not seen to bind rRNA by itself. It is important during the early stages of 50S assembly. The chain is Large ribosomal subunit protein uL13 from Mycolicibacterium paratuberculosis (strain ATCC BAA-968 / K-10) (Mycobacterium paratuberculosis).